Here is a 759-residue protein sequence, read N- to C-terminus: Protein YdeP (759 aa).

The [4Fe-4S] cluster site is built by Cys49 and Cys52.

It belongs to the prokaryotic molybdopterin-containing oxidoreductase family. Requires [4Fe-4S] cluster as cofactor. Mo-bis(molybdopterin guanine dinucleotide) serves as cofactor.

Functionally, probably involved in acid resistance. This Escherichia coli O6:H1 (strain CFT073 / ATCC 700928 / UPEC) protein is Protein YdeP (ydeP).